Consider the following 210-residue polypeptide: 3-demethoxyubiquinol 3-hydroxylase (210 aa).

Fe cation is bound by residues Glu-59, Glu-89, His-92, Glu-141, Glu-173, and His-176.

It belongs to the COQ7 family. Fe cation serves as cofactor.

It localises to the cell membrane. It carries out the reaction a 5-methoxy-2-methyl-3-(all-trans-polyprenyl)benzene-1,4-diol + AH2 + O2 = a 3-demethylubiquinol + A + H2O. It participates in cofactor biosynthesis; ubiquinone biosynthesis. In terms of biological role, catalyzes the hydroxylation of 2-nonaprenyl-3-methyl-6-methoxy-1,4-benzoquinol during ubiquinone biosynthesis. The polypeptide is 3-demethoxyubiquinol 3-hydroxylase (Marinomonas sp. (strain MWYL1)).